The chain runs to 333 residues: Adenosine deaminase (333 aa).

Histidine 12 and histidine 14 together coordinate Zn(2+). Residues histidine 14, aspartate 16, and glycine 170 each coordinate substrate. Histidine 197 serves as a coordination point for Zn(2+). The active-site Proton donor is glutamate 200. Zn(2+) is bound at residue aspartate 278. Aspartate 279 is a substrate binding site.

It belongs to the metallo-dependent hydrolases superfamily. Adenosine and AMP deaminases family. Adenosine deaminase subfamily. The cofactor is Zn(2+).

The catalysed reaction is adenosine + H2O + H(+) = inosine + NH4(+). It catalyses the reaction 2'-deoxyadenosine + H2O + H(+) = 2'-deoxyinosine + NH4(+). In terms of biological role, catalyzes the hydrolytic deamination of adenosine and 2-deoxyadenosine. This chain is Adenosine deaminase, found in Escherichia coli O45:K1 (strain S88 / ExPEC).